Reading from the N-terminus, the 285-residue chain is MGDPELDYTIEFPEPSLQGCPWDPEREPVVILLGWGGCKDQYLAKYSAIYHNQGCTVIKYTAAWNAVFISESLGFSSLREDAKKLLELLFDYEIEKSPILFHVFSNGGFMLYRYIVELLHSHCRLNKLHVVGTIFDSAPGNRNVIGSVRALDTILRTSTNNAIRFLALAAFAIMVIILRIVLYPVTKFLHENHYDAMKKDSSRWPQLYLYSRADPIISYIDVESMIAARRRCCLPTEALDFGKSEHVSHFRRFPHRYSEMCTSFLRDCVRKAAVSMLTSEHPVSF.

A helical membrane pass occupies residues 165 to 185; it reads FLALAAFAIMVIILRIVLYPV.

The protein belongs to the TMEM53 family.

It localises to the nucleus outer membrane. Ensures normal bone formation, through the negative regulation of bone morphogenetic protein (BMP) signaling in osteoblast lineage cells by blocking cytoplasm-nucleus translocation of phosphorylated SMAD proteins. This is Transmembrane protein 53-B (tmem53-b) from Xenopus laevis (African clawed frog).